Reading from the N-terminus, the 171-residue chain is 3-hydroxydecanoyl-[acyl-carrier-protein] dehydratase (171 aa).

Residue histidine 70 is part of the active site.

The protein belongs to the thioester dehydratase family. FabA subfamily. As to quaternary structure, homodimer.

The protein localises to the cytoplasm. The enzyme catalyses a (3R)-hydroxyacyl-[ACP] = a (2E)-enoyl-[ACP] + H2O. The catalysed reaction is (3R)-hydroxydecanoyl-[ACP] = (2E)-decenoyl-[ACP] + H2O. It carries out the reaction (2E)-decenoyl-[ACP] = (3Z)-decenoyl-[ACP]. It functions in the pathway lipid metabolism; fatty acid biosynthesis. Its function is as follows. Necessary for the introduction of cis unsaturation into fatty acids. Catalyzes the dehydration of (3R)-3-hydroxydecanoyl-ACP to E-(2)-decenoyl-ACP and then its isomerization to Z-(3)-decenoyl-ACP. Can catalyze the dehydratase reaction for beta-hydroxyacyl-ACPs with saturated chain lengths up to 16:0, being most active on intermediate chain length. The chain is 3-hydroxydecanoyl-[acyl-carrier-protein] dehydratase from Stenotrophomonas maltophilia (strain K279a).